Reading from the N-terminus, the 171-residue chain is Protein GrpE (171 aa).

Residues 1-22 form a disordered region; that stretch reads MNHEHPDIESQQSAADAAAAAG.

This sequence belongs to the GrpE family. As to quaternary structure, homodimer.

Its subcellular location is the cytoplasm. In terms of biological role, participates actively in the response to hyperosmotic and heat shock by preventing the aggregation of stress-denatured proteins, in association with DnaK and GrpE. It is the nucleotide exchange factor for DnaK and may function as a thermosensor. Unfolded proteins bind initially to DnaJ; upon interaction with the DnaJ-bound protein, DnaK hydrolyzes its bound ATP, resulting in the formation of a stable complex. GrpE releases ADP from DnaK; ATP binding to DnaK triggers the release of the substrate protein, thus completing the reaction cycle. Several rounds of ATP-dependent interactions between DnaJ, DnaK and GrpE are required for fully efficient folding. The sequence is that of Protein GrpE from Stenotrophomonas maltophilia (strain R551-3).